The chain runs to 155 residues: Endoribonuclease YbeY (155 aa).

Positions 114, 118, and 124 each coordinate Zn(2+).

This sequence belongs to the endoribonuclease YbeY family. The cofactor is Zn(2+).

Its subcellular location is the cytoplasm. Its function is as follows. Single strand-specific metallo-endoribonuclease involved in late-stage 70S ribosome quality control and in maturation of the 3' terminus of the 16S rRNA. In Escherichia coli O7:K1 (strain IAI39 / ExPEC), this protein is Endoribonuclease YbeY.